Consider the following 310-residue polypeptide: Ribosomal RNA small subunit methyltransferase H (310 aa).

Residues 32–34 (GGH), Asp-52, Phe-79, Asp-100, and Gln-107 each bind S-adenosyl-L-methionine.

This sequence belongs to the methyltransferase superfamily. RsmH family.

It is found in the cytoplasm. The catalysed reaction is cytidine(1402) in 16S rRNA + S-adenosyl-L-methionine = N(4)-methylcytidine(1402) in 16S rRNA + S-adenosyl-L-homocysteine + H(+). In terms of biological role, specifically methylates the N4 position of cytidine in position 1402 (C1402) of 16S rRNA. The sequence is that of Ribosomal RNA small subunit methyltransferase H from Bacillus anthracis (strain A0248).